A 600-amino-acid polypeptide reads, in one-letter code: Aspartate--tRNA(Asp/Asn) ligase (600 aa).

Glu187 lines the L-aspartate pocket. Positions 211–214 are aspartate; the sequence is QIFK. Arg233 and His463 together coordinate L-aspartate. 233-235 lines the ATP pocket; sequence RDE. Glu497 is an ATP binding site. Arg504 provides a ligand contact to L-aspartate. 549–552 provides a ligand contact to ATP; the sequence is GVDR.

The protein belongs to the class-II aminoacyl-tRNA synthetase family. Type 1 subfamily. As to quaternary structure, homodimer.

It is found in the cytoplasm. The catalysed reaction is tRNA(Asx) + L-aspartate + ATP = L-aspartyl-tRNA(Asx) + AMP + diphosphate. Its function is as follows. Aspartyl-tRNA synthetase with relaxed tRNA specificity since it is able to aspartylate not only its cognate tRNA(Asp) but also tRNA(Asn). Reaction proceeds in two steps: L-aspartate is first activated by ATP to form Asp-AMP and then transferred to the acceptor end of tRNA(Asp/Asn). In Wolbachia sp. subsp. Drosophila simulans (strain wRi), this protein is Aspartate--tRNA(Asp/Asn) ligase.